We begin with the raw amino-acid sequence, 158 residues long: 6,7-dimethyl-8-ribityllumazine synthase (158 aa).

Residues F23, 61–63 (SFE), and 85–87 (AVI) contribute to the 5-amino-6-(D-ribitylamino)uracil site. 90 to 91 (ET) provides a ligand contact to (2S)-2-hydroxy-3-oxobutyl phosphate. The Proton donor role is filled by H93. F118 lines the 5-amino-6-(D-ribitylamino)uracil pocket. Residue R132 participates in (2S)-2-hydroxy-3-oxobutyl phosphate binding.

The protein belongs to the DMRL synthase family.

The catalysed reaction is (2S)-2-hydroxy-3-oxobutyl phosphate + 5-amino-6-(D-ribitylamino)uracil = 6,7-dimethyl-8-(1-D-ribityl)lumazine + phosphate + 2 H2O + H(+). It participates in cofactor biosynthesis; riboflavin biosynthesis; riboflavin from 2-hydroxy-3-oxobutyl phosphate and 5-amino-6-(D-ribitylamino)uracil: step 1/2. Its function is as follows. Catalyzes the formation of 6,7-dimethyl-8-ribityllumazine by condensation of 5-amino-6-(D-ribitylamino)uracil with 3,4-dihydroxy-2-butanone 4-phosphate. This is the penultimate step in the biosynthesis of riboflavin. The polypeptide is 6,7-dimethyl-8-ribityllumazine synthase (Prochlorococcus marinus (strain MIT 9312)).